We begin with the raw amino-acid sequence, 457 residues long: Serine/threonine-protein phosphatase 2A activator 2 (457 aa).

2 disordered regions span residues 387-407 (DAHG…GEGQ) and 426-457 (AEQE…IPFD). A compositionally biased stretch (basic residues) spans 391 to 400 (HIHPAGKPHA).

The protein belongs to the PTPA-type PPIase family.

It localises to the cytoplasm. It catalyses the reaction [protein]-peptidylproline (omega=180) = [protein]-peptidylproline (omega=0). Its function is as follows. PPIases accelerate the folding of proteins. It catalyzes the cis-trans isomerization of proline imidic peptide bonds in oligopeptides. Acts as a regulatory subunit for PP2A-like phosphatases modulating their activity or substrate specificity, probably by inducing a conformational change in the catalytic subunit, a direct target of the PPIase. Can reactivate inactive phosphatase PP2A-phosphatase methylesterase complexes (PP2Ai) in presence of ATP and Mg(2+) by dissociating the inactive form from the complex. In Mycosarcoma maydis (Corn smut fungus), this protein is Serine/threonine-protein phosphatase 2A activator 2 (RRD2).